Consider the following 99-residue polypeptide: Small ribosomal subunit protein uS14m (99 aa).

The protein belongs to the universal ribosomal protein uS14 family.

Its subcellular location is the mitochondrion. This chain is Small ribosomal subunit protein uS14m (RPS14), found in Acanthamoeba castellanii (Amoeba).